A 311-amino-acid polypeptide reads, in one-letter code: Mediator of RNA polymerase II transcription subunit 27 (311 aa).

Belongs to the Mediator complex subunit 27 family. In terms of assembly, component of the Mediator complex.

The protein resides in the nucleus. Functionally, component of the Mediator complex, a coactivator involved in the regulated transcription of nearly all RNA polymerase II-dependent genes. Mediator functions as a bridge to convey information from gene-specific regulatory proteins to the basal RNA polymerase II transcription machinery. Mediator is recruited to promoters by direct interactions with regulatory proteins and serves as a scaffold for the assembly of a functional preinitiation complex with RNA polymerase II and the general transcription factors. Required for the development of dopaminergic amacrine cells in the retina. May also negatively regulate the development of rod photoreceptor cells. The sequence is that of Mediator of RNA polymerase II transcription subunit 27 (med27) from Danio rerio (Zebrafish).